Consider the following 193-residue polypeptide: Xanthine phosphoribosyltransferase (193 aa).

Positions 20 and 27 each coordinate xanthine. 5-phospho-alpha-D-ribose 1-diphosphate is bound at residue 128–132 (ANGQA). K156 is a binding site for xanthine.

This sequence belongs to the purine/pyrimidine phosphoribosyltransferase family. Xpt subfamily. In terms of assembly, homodimer.

It is found in the cytoplasm. The catalysed reaction is XMP + diphosphate = xanthine + 5-phospho-alpha-D-ribose 1-diphosphate. Its pathway is purine metabolism; XMP biosynthesis via salvage pathway; XMP from xanthine: step 1/1. Its function is as follows. Converts the preformed base xanthine, a product of nucleic acid breakdown, to xanthosine 5'-monophosphate (XMP), so it can be reused for RNA or DNA synthesis. The sequence is that of Xanthine phosphoribosyltransferase from Streptococcus pneumoniae (strain CGSP14).